We begin with the raw amino-acid sequence, 102 residues long: Large ribosomal subunit protein uL23 (102 aa).

Belongs to the universal ribosomal protein uL23 family. As to quaternary structure, part of the 50S ribosomal subunit. Contacts protein L29, and trigger factor when it is bound to the ribosome.

Its function is as follows. One of the early assembly proteins it binds 23S rRNA. One of the proteins that surrounds the polypeptide exit tunnel on the outside of the ribosome. Forms the main docking site for trigger factor binding to the ribosome. This Paramagnetospirillum magneticum (strain ATCC 700264 / AMB-1) (Magnetospirillum magneticum) protein is Large ribosomal subunit protein uL23.